The following is a 130-amino-acid chain: MSGRGKQGGKARAKAKTRSSRAGLQFPVGRVHRLLRKGNYSERVGAGAPVYLAAVLEYLTAEILELAGNAARDNKKTRIIPRHLQLAIRNDEELNKLLGRVTIAQGGVLPNIQAVLLPKKTESHHKPKGK.

The segment at 1-22 (MSGRGKQGGKARAKAKTRSSRA) is disordered. At serine 2 the chain carries Phosphoserine; by RPS6KA5. A Citrulline; alternate modification is found at arginine 4. Arginine 4 bears the Symmetric dimethylarginine; by PRMT5; alternate mark. The residue at position 6 (lysine 6) is an N6-(2-hydroxyisobutyryl)lysine; alternate. Lysine 6 carries the post-translational modification N6-(beta-hydroxybutyryl)lysine; alternate. Over residues 7–19 (QGGKARAKAKTRS) the composition is skewed to basic residues. An N6-(2-hydroxyisobutyryl)lysine modification is found at lysine 10. Lysine 10 carries the post-translational modification N6-lactoyllysine; alternate. Lysine 37 is subject to N6-(2-hydroxyisobutyryl)lysine; alternate. At lysine 37 the chain carries N6-(beta-hydroxybutyryl)lysine; alternate. Lysine 37 is subject to N6-crotonyllysine; alternate. N6-(2-hydroxyisobutyryl)lysine is present on residues lysine 75, lysine 76, and lysine 96. Lysine 96 bears the N6-glutaryllysine; alternate mark. Glutamine 105 bears the N5-methylglutamine mark. An N6-(2-hydroxyisobutyryl)lysine; alternate modification is found at lysine 119. N6-crotonyllysine; alternate is present on residues lysine 119 and lysine 120. Residues lysine 119 and lysine 120 each carry the N6-glutaryllysine; alternate modification. Lysine 120 is modified (N6-(beta-hydroxybutyryl)lysine; alternate). Residue lysine 120 forms a Glycyl lysine isopeptide (Lys-Gly) (interchain with G-Cter in ubiquitin); alternate linkage. At threonine 121 the chain carries Phosphothreonine; by DCAF1. Lysine 126 carries the N6-(beta-hydroxybutyryl)lysine; alternate modification. Lysine 126 bears the N6-crotonyllysine; alternate mark. Lysine 126 carries the post-translational modification N6-glutaryllysine; alternate.

This sequence belongs to the histone H2A family. In terms of assembly, the nucleosome is a histone octamer containing two molecules each of H2A, H2B, H3 and H4 assembled in one H3-H4 heterotetramer and two H2A-H2B heterodimers. The octamer wraps approximately 147 bp of DNA. Post-translationally, deiminated on Arg-4 in granulocytes upon calcium entry. In terms of processing, monoubiquitination of Lys-120 (H2AK119Ub) by RING1, TRIM37 and RNF2/RING2 complex gives a specific tag for epigenetic transcriptional repression and participates in X chromosome inactivation of female mammals. It is involved in the initiation of both imprinted and random X inactivation. Ubiquitinated H2A is enriched in inactive X chromosome chromatin. Ubiquitination of H2A functions downstream of methylation of 'Lys-27' of histone H3 (H3K27me). H2AK119Ub by RNF2/RING2 can also be induced by ultraviolet and may be involved in DNA repair. Following DNA double-strand breaks (DSBs), it is ubiquitinated through 'Lys-63' linkage of ubiquitin moieties by the E2 ligase UBE2N and the E3 ligases RNF8 and RNF168, leading to the recruitment of repair proteins to sites of DNA damage. Ubiquitination at Lys-14 and Lys-16 (H2AK13Ub and H2AK15Ub, respectively) in response to DNA damage is initiated by RNF168 that mediates monoubiquitination at these 2 sites, and 'Lys-63'-linked ubiquitin are then conjugated to monoubiquitin; RNF8 is able to extend 'Lys-63'-linked ubiquitin chains in vitro. H2AK119Ub and ionizing radiation-induced 'Lys-63'-linked ubiquitination (H2AK13Ub and H2AK15Ub) are distinct events. Phosphorylation on Ser-2 (H2AS1ph) is enhanced during mitosis. Phosphorylation on Ser-2 by RPS6KA5/MSK1 directly represses transcription. Acetylation of H3 inhibits Ser-2 phosphorylation by RPS6KA5/MSK1. Phosphorylation at Thr-121 (H2AT120ph) by DCAF1 is present in the regulatory region of many tumor suppresor genes and down-regulates their transcription. Post-translationally, symmetric dimethylation on Arg-4 by the PRDM1/PRMT5 complex may play a crucial role in the germ-cell lineage. In terms of processing, glutamine methylation at Gln-105 (H2AQ104me) by FBL is specifically dedicated to polymerase I. It is present at 35S ribosomal DNA locus and impairs binding of the FACT complex. Crotonylation (Kcr) is specifically present in male germ cells and marks testis-specific genes in post-meiotic cells, including X-linked genes that escape sex chromosome inactivation in haploid cells. Crotonylation marks active promoters and enhancers and confers resistance to transcriptional repressors. It is also associated with post-meiotically activated genes on autosomes. Post-translationally, hydroxybutyrylation of histones is induced by starvation. In terms of processing, lactylated in macrophages by EP300/P300 by using lactoyl-CoA directly derived from endogenous or exogenous lactate, leading to stimulates gene transcription.

It is found in the nucleus. It localises to the chromosome. Core component of nucleosome. Nucleosomes wrap and compact DNA into chromatin, limiting DNA accessibility to the cellular machineries which require DNA as a template. Histones thereby play a central role in transcription regulation, DNA repair, DNA replication and chromosomal stability. DNA accessibility is regulated via a complex set of post-translational modifications of histones, also called histone code, and nucleosome remodeling. The sequence is that of Histone H2A type 1-F (Hist1h2af) from Mus musculus (Mouse).